The chain runs to 815 residues: Lon protease 2 (815 aa).

In terms of domain architecture, Lon N-terminal spans 19 to 212 (LPVLPLINTV…RLSVVLSQEI (194 aa)). ATP is bound at residue 365-372 (GPPGVGKT). The Lon proteolytic domain maps to 601–782 (RDEIGVATGM…DEVLPIAFVS (182 aa)). Catalysis depends on residues S688 and K731.

It belongs to the peptidase S16 family. As to quaternary structure, homohexamer. Organized in a ring with a central cavity.

The protein localises to the cytoplasm. The enzyme catalyses Hydrolysis of proteins in presence of ATP.. ATP-dependent serine protease that mediates the selective degradation of mutant and abnormal proteins as well as certain short-lived regulatory proteins. Required for cellular homeostasis and for survival from DNA damage and developmental changes induced by stress. Degrades polypeptides processively to yield small peptide fragments that are 5 to 10 amino acids long. Binds to DNA in a double-stranded, site-specific manner. This Herpetosiphon aurantiacus (strain ATCC 23779 / DSM 785 / 114-95) protein is Lon protease 2.